The sequence spans 61 residues: Protein translocase subunit SecE (61 aa).

Residues 39–59 (VGIIIIGLIGFILSIVSQVLF) form a helical membrane-spanning segment.

Belongs to the SecE/SEC61-gamma family. In terms of assembly, component of the Sec protein translocase complex. Heterotrimer consisting of SecY (alpha), SecG (beta) and SecE (gamma) subunits. The heterotrimers can form oligomers, although 1 heterotrimer is thought to be able to translocate proteins. Interacts with the ribosome. May interact with SecDF, and other proteins may be involved.

Its subcellular location is the cell membrane. Essential subunit of the Sec protein translocation channel SecYEG. Clamps together the 2 halves of SecY. May contact the channel plug during translocation. This chain is Protein translocase subunit SecE, found in Methanosphaera stadtmanae (strain ATCC 43021 / DSM 3091 / JCM 11832 / MCB-3).